The chain runs to 389 residues: S-adenosylmethionine synthase (389 aa).

His-17 contributes to the ATP binding site. Mg(2+) is bound at residue Asp-19. Residue Glu-45 coordinates K(+). The L-methionine site is built by Glu-58 and Gln-101. Residues 101-111 (QSPDISQGVTE) form a flexible loop region. Residues 168 to 170 (DSK), 234 to 235 (RF), Asp-243, 249 to 250 (RK), Ala-266, and Lys-270 contribute to the ATP site. An L-methionine-binding site is contributed by Asp-243. Lys-274 contacts L-methionine.

It belongs to the AdoMet synthase family. As to quaternary structure, homotetramer; dimer of dimers. Mg(2+) is required as a cofactor. K(+) serves as cofactor.

The protein localises to the cytoplasm. It carries out the reaction L-methionine + ATP + H2O = S-adenosyl-L-methionine + phosphate + diphosphate. Its pathway is amino-acid biosynthesis; S-adenosyl-L-methionine biosynthesis; S-adenosyl-L-methionine from L-methionine: step 1/1. Its function is as follows. Catalyzes the formation of S-adenosylmethionine (AdoMet) from methionine and ATP. The overall synthetic reaction is composed of two sequential steps, AdoMet formation and the subsequent tripolyphosphate hydrolysis which occurs prior to release of AdoMet from the enzyme. The protein is S-adenosylmethionine synthase of Geobacter sulfurreducens (strain ATCC 51573 / DSM 12127 / PCA).